A 417-amino-acid polypeptide reads, in one-letter code: 3-isopropylmalate dehydratase large subunit 2 (417 aa).

[4Fe-4S] cluster contacts are provided by cysteine 298, cysteine 358, and cysteine 361.

This sequence belongs to the aconitase/IPM isomerase family. LeuC type 2 subfamily. As to quaternary structure, heterodimer of LeuC and LeuD. Requires [4Fe-4S] cluster as cofactor.

It catalyses the reaction (2R,3S)-3-isopropylmalate = (2S)-2-isopropylmalate. It participates in amino-acid biosynthesis; L-leucine biosynthesis; L-leucine from 3-methyl-2-oxobutanoate: step 2/4. Catalyzes the isomerization between 2-isopropylmalate and 3-isopropylmalate, via the formation of 2-isopropylmaleate. The protein is 3-isopropylmalate dehydratase large subunit 2 of Thermotoga maritima (strain ATCC 43589 / DSM 3109 / JCM 10099 / NBRC 100826 / MSB8).